Reading from the N-terminus, the 138-residue chain is Large ribosomal subunit protein uL16c (138 aa).

This sequence belongs to the universal ribosomal protein uL16 family. Part of the 50S ribosomal subunit.

The protein resides in the plastid. The protein localises to the chloroplast. The polypeptide is Large ribosomal subunit protein uL16c (Chaetosphaeridium globosum (Charophycean green alga)).